Consider the following 264-residue polypeptide: Tritrans,polycis-undecaprenyl-diphosphate synthase (geranylgeranyl-diphosphate specific) (264 aa).

The active site involves Asp43. Position 43 (Asp43) interacts with Mg(2+). Residues 44–47 (GNRR), Trp48, His60, and 88–90 (STE) contribute to the substrate site. Residue Asn91 is the Proton acceptor of the active site. Residues Phe92, Arg94, Arg213, and 219-221 (RIS) contribute to the substrate site. A Mg(2+)-binding site is contributed by Glu232.

Belongs to the UPP synthase family. In terms of assembly, homodimer. Mg(2+) is required as a cofactor.

It carries out the reaction geranylgeranyl diphosphate + 7 isopentenyl diphosphate = tri-trans,hepta-cis-undecaprenyl diphosphate + 7 diphosphate. In terms of biological role, catalyzes the sequential condensation of isopentenyl diphosphate (IPP) with geranylgeranyl diphosphate (GGPP) to yield (2Z,6Z,10Z,14Z,18Z,22Z,26Z,30E,34E,38E)-undecaprenyl diphosphate (tritrans,heptacis-UPP). It is probably the precursor of glycosyl carrier lipids. The polypeptide is Tritrans,polycis-undecaprenyl-diphosphate synthase (geranylgeranyl-diphosphate specific) (Thermococcus kodakarensis (strain ATCC BAA-918 / JCM 12380 / KOD1) (Pyrococcus kodakaraensis (strain KOD1))).